We begin with the raw amino-acid sequence, 683 residues long: Heat shock protein homolog ECU03_0520 (683 aa).

It belongs to the heat shock protein 70 family.

It is found in the cytoplasm. This is Heat shock protein homolog ECU03_0520 from Encephalitozoon cuniculi (strain GB-M1) (Microsporidian parasite).